A 141-amino-acid polypeptide reads, in one-letter code: 4-hydroxybenzoyl-CoA thioesterase (141 aa).

Asp-17 is an active-site residue. Substrate contacts are provided by residues Trp-47, 59-61, and Lys-90; that span reads TPI.

It belongs to the 4-hydroxybenzoyl-CoA thioesterase family. Homotetramer.

It catalyses the reaction 4-hydroxybenzoyl-CoA + H2O = 4-hydroxybenzoate + CoA + H(+). The protein operates within xenobiotic degradation; 4-chlorobenzoate degradation; 4-hydroxybenzoate from 4-chlorobenzoate: step 3/3. Unaffected by EDTA, Mg(2+), Mn(2+), Fe(2+), Ca(2+), Co(2+) and Zn(2+). Its function is as follows. Hydrolyzes 4-hydroxybenzoate-CoA, and to a lesser extent benzoyl-CoA and 4-chlorobenzoate-CoA. Not active against aliphatic acyl-CoA thioesters, including palmitoyl-CoA, hexanoyl-CoA and acetyl-CoA. This chain is 4-hydroxybenzoyl-CoA thioesterase, found in Pseudomonas sp. (strain CBS-3).